Reading from the N-terminus, the 684-residue chain is Suppressor of presenilin protein 3 (684 aa).

C2H2-type zinc fingers lie at residues 21-43 (YKCH…LRRH), 48-71 (FDCE…LQSH), 123-145 (YKCP…ILSH), 261-283 (YLCR…FRHH), and 291-313 (WTCI…VKMH). Disordered regions lie at residues 337–359 (DLNK…HSDM), 419–440 (KNNS…SKSD), and 469–501 (TSKF…DQFQ). 2 consecutive C2H2-type zinc fingers follow at residues 590–612 (RECT…RDKH) and 618–641 (HTCP…FVDH). The interval 652–684 (LPSSDSEDDNIPVPPDTPQRKKKAPKRGKRRGW) is disordered. Residues 671–684 (RKKKAPKRGKRRGW) show a composition bias toward basic residues.

The protein localises to the nucleus. Its function is as follows. Probable transcriptional regulator, which participates in the transcriptional repression of the presenilin protein hop-1. This is Suppressor of presenilin protein 3 (spr-3) from Caenorhabditis elegans.